We begin with the raw amino-acid sequence, 405 residues long: MADKVLKEKRRLFIRSVGTGTVNSLLDELLEKRVLNQEEMEKVRDENATVMDKARALIDAVIRKGPQACQIFIGHICEDDPHLAETLRLSSGPQSGNFLKTQDSQAVVHSSPALQAMPDDLAKLALSGPKVSLKLCSPEVVERIWKEKSAEMYPIMGKSMTRTRLALIICNTEFDNLSRRAGAEVDIASMKVLLEGLGYSVEVKENLTALDMTTELKAFAARPEHRSSDSTFLVFMSHGIREGICGKKFSEKVPDVLEVNTIFQIFNTRNCPNLRDKPKVIIIQACRGENQGVVWLKDSTGTSGNSSSLAPDDFEDDAIKKAHVEKDFIAFCSSTPDTVSWRSPTTGSVFIEKLIENLQEYAWSCDLEEIFRKVRLSFELPDARAQMPTAERVTLTRRFYLFPGH.

A CARD domain is found at 1–91; that stretch reads MADKVLKEKR…HLAETLRLSS (91 aa). Residues 1 to 119 constitute a propeptide that is removed on maturation; that stretch reads MADKVLKEKR…SSPALQAMPD (119 aa). Residues histidine 238 and cysteine 286 contribute to the active site. Residues 299 to 317 constitute a propeptide that is removed on maturation; sequence STGTSGNSSSLAPDDFEDD. Serine 303 carries the phosphoserine modification.

It belongs to the peptidase C14A family. In terms of assembly, heterotetramer that consists of two anti-parallel arranged heterodimers, each one formed by a 20 kDa (Caspase-1 subunit p20) and a 10 kDa (Caspase-1 subunit p10) subunit. May be a component of the inflammasome, a protein complex which also includes PYCARD, CARD8 and NLRP2 and whose function would be the activation of pro-inflammatory caspases. Component of the AIM2 PANoptosome complex, a multiprotein complex that drives inflammatory cell death (PANoptosis). Both the p10 and p20 subunits interact with MEFV. Interacts with CARD17P/INCA and CARD18. Interacts with SERPINB1; this interaction regulates CASP1 activity. Heterotetramer that consists of two anti-parallel arranged heterodimers, each one formed by a 20 kDa (Caspase-1 subunit p20) and a 10 kDa (Caspase-1 subunit p10) subunit. In terms of processing, the two subunits are derived from the precursor sequence by an autocatalytic mechanism. Ubiquitinated via 'Lys-11'-linked polyubiquitination. Deubiquitinated by USP8.

The protein localises to the cytoplasm. Its subcellular location is the cell membrane. The catalysed reaction is Strict requirement for an Asp residue at position P1 and has a preferred cleavage sequence of Tyr-Val-Ala-Asp-|-.. Its function is as follows. Thiol protease involved in a variety of inflammatory processes by proteolytically cleaving other proteins, such as the precursors of the inflammatory cytokines interleukin-1 beta (IL1B) and interleukin 18 (IL18) as well as the pyroptosis inducer Gasdermin-D (GSDMD), into active mature peptides. Plays a key role in cell immunity as an inflammatory response initiator: once activated through formation of an inflammasome complex, it initiates a pro-inflammatory response through the cleavage of the two inflammatory cytokines IL1B and IL18, releasing the mature cytokines which are involved in a variety of inflammatory processes. Cleaves a tetrapeptide after an Asp residue at position P1. Also initiates pyroptosis, a programmed lytic cell death pathway, through cleavage of GSDMD. In contrast to cleavage of interleukin IL1B, recognition and cleavage of GSDMD is not strictly dependent on the consensus cleavage site but depends on an exosite interface on CASP1 that recognizes and binds the Gasdermin-D, C-terminal (GSDMD-CT) part. Cleaves and activates CASP7 in response to bacterial infection, promoting plasma membrane repair. Upon inflammasome activation, during DNA virus infection but not RNA virus challenge, controls antiviral immunity through the cleavage of CGAS, rendering it inactive. In apoptotic cells, cleaves SPHK2 which is released from cells and remains enzymatically active extracellularly. The chain is Caspase-1 (CASP1) from Equus caballus (Horse).